We begin with the raw amino-acid sequence, 1517 residues long: DNA-directed RNA polymerase subunit beta' (1517 aa).

4 residues coordinate Zn(2+): C71, C73, C86, and C89. The Mg(2+) site is built by D482, D484, and D486. Residues C812, C886, C893, and C896 each contribute to the Zn(2+) site.

This sequence belongs to the RNA polymerase beta' chain family. In terms of assembly, the RNAP catalytic core consists of 2 alpha, 1 beta, 1 beta' and 1 omega subunit. When a sigma factor is associated with the core the holoenzyme is formed, which can initiate transcription. It depends on Mg(2+) as a cofactor. The cofactor is Zn(2+).

It catalyses the reaction RNA(n) + a ribonucleoside 5'-triphosphate = RNA(n+1) + diphosphate. DNA-dependent RNA polymerase catalyzes the transcription of DNA into RNA using the four ribonucleoside triphosphates as substrates. In Campylobacter lari (strain RM2100 / D67 / ATCC BAA-1060), this protein is DNA-directed RNA polymerase subunit beta'.